Here is a 274-residue protein sequence, read N- to C-terminus: ATP synthase subunit a (274 aa).

A run of 5 helical transmembrane segments spans residues 43–63 (TLNI…LLVF), 103–123 (VIAP…MMDL), 149–169 (DVSI…FYSI), 223–243 (LIFI…LSVP), and 245–265 (AIFH…LTIV).

This sequence belongs to the ATPase A chain family. As to quaternary structure, F-type ATPases have 2 components, CF(1) - the catalytic core - and CF(0) - the membrane proton channel. CF(1) has five subunits: alpha(3), beta(3), gamma(1), delta(1), epsilon(1). CF(0) has three main subunits: a(1), b(2) and c(9-12). The alpha and beta chains form an alternating ring which encloses part of the gamma chain. CF(1) is attached to CF(0) by a central stalk formed by the gamma and epsilon chains, while a peripheral stalk is formed by the delta and b chains.

Its subcellular location is the cell inner membrane. Functionally, key component of the proton channel; it plays a direct role in the translocation of protons across the membrane. This chain is ATP synthase subunit a, found in Yersinia pestis bv. Antiqua (strain Angola).